The chain runs to 156 residues: Putative F-box protein R637 (156 aa).

One can recognise an F-box domain in the interval His4–Lys51.

This chain is Putative F-box protein R637, found in Acanthamoeba polyphaga mimivirus (APMV).